A 214-amino-acid chain; its full sequence is Thymidylate kinase (214 aa).

10–17 contributes to the ATP binding site; the sequence is GIDGCGKT.

The protein belongs to the thymidylate kinase family.

It catalyses the reaction dTMP + ATP = dTDP + ADP. Functionally, phosphorylation of dTMP to form dTDP in both de novo and salvage pathways of dTTP synthesis. The protein is Thymidylate kinase of Prochlorococcus marinus subsp. pastoris (strain CCMP1986 / NIES-2087 / MED4).